Consider the following 242-residue polypeptide: Uridylate kinase (242 aa).

Position 12–15 (12–15 (KLSG)) interacts with ATP. An involved in allosteric activation by GTP region spans residues 20-25 (GEKGYG). Glycine 55 lines the UMP pocket. Positions 56 and 60 each coordinate ATP. UMP contacts are provided by residues aspartate 75 and 136 to 143 (TGNPYFST). 2 residues coordinate ATP: tyrosine 169 and aspartate 172.

Belongs to the UMP kinase family. As to quaternary structure, homohexamer.

It localises to the cytoplasm. The enzyme catalyses UMP + ATP = UDP + ADP. It functions in the pathway pyrimidine metabolism; CTP biosynthesis via de novo pathway; UDP from UMP (UMPK route): step 1/1. With respect to regulation, allosterically activated by GTP. Inhibited by UTP. Its function is as follows. Catalyzes the reversible phosphorylation of UMP to UDP. This is Uridylate kinase from Carboxydothermus hydrogenoformans (strain ATCC BAA-161 / DSM 6008 / Z-2901).